Consider the following 309-residue polypeptide: uncharacterized protein (309 aa).

This sequence to S.pombe SpAC14C4.04.

This is an uncharacterized protein from Schizosaccharomyces pombe (strain 972 / ATCC 24843) (Fission yeast).